The sequence spans 212 residues: External core antigen (212 aa).

Positions 1–19 (MQLFHLCLIISCSCPTVQA) are cleaved as a signal peptide. The interval 25 to 27 (GWL) is HBEAG. A disordered region spans residues 172–212 (LPETTVVRRRGRSPRRRTPSPRRRRSQSPRRRRSQSRESQC). Basic residues predominate over residues 178–205 (VRRRGRSPRRRTPSPRRRRSQSPRRRRS). A 1; half-length repeat occupies 184–190 (SPRRRTP). Positions 184-206 (SPRRRTPSPRRRRSQSPRRRRSQ) are 3 X 8 AA repeats of S-P-R-R-R-R-S-Q. The propeptide occupies 184–212 (SPRRRTPSPRRRRSQSPRRRRSQSRESQC). 2 repeat units span residues 191–198 (SPRRRRSQ) and 199–206 (SPRRRRSQ).

It belongs to the orthohepadnavirus precore antigen family. Homodimerizes. In terms of processing, phosphorylated. Cleaved by host furin.

It localises to the secreted. Its subcellular location is the host nucleus. May regulate immune response to the intracellular capsid in acting as a T-cell tolerogen, by having an immunoregulatory effect which prevents destruction of infected cells by cytotoxic T-cells. This immune regulation may predispose to chronicity during perinatal infections and prevent severe liver injury during adult infections. This chain is External core antigen, found in Hepatitis B virus genotype D (isolate Germany/1-91/1991) (HBV-D).